The sequence spans 439 residues: tRNA modification GTPase MnmE (439 aa).

The (6S)-5-formyl-5,6,7,8-tetrahydrofolate site is built by Arg-26, Glu-88, and Arg-127. Residues 220–367 (GARLALIGRP…LRDAIHTALI (148 aa)) form the TrmE-type G domain. K(+) is bound at residue Asn-230. GTP contacts are provided by residues 230 to 235 (NAGKSS), 249 to 255 (TPIPGTT), and 274 to 277 (DTAG). Mg(2+) is bound at residue Ser-234. 3 residues coordinate K(+): Thr-249, Ile-251, and Thr-254. Mg(2+) is bound at residue Thr-255. Lys-439 contacts (6S)-5-formyl-5,6,7,8-tetrahydrofolate.

It belongs to the TRAFAC class TrmE-Era-EngA-EngB-Septin-like GTPase superfamily. TrmE GTPase family. Homodimer. Heterotetramer of two MnmE and two MnmG subunits. K(+) is required as a cofactor.

Its subcellular location is the cytoplasm. In terms of biological role, exhibits a very high intrinsic GTPase hydrolysis rate. Involved in the addition of a carboxymethylaminomethyl (cmnm) group at the wobble position (U34) of certain tRNAs, forming tRNA-cmnm(5)s(2)U34. This Deinococcus geothermalis (strain DSM 11300 / CIP 105573 / AG-3a) protein is tRNA modification GTPase MnmE.